The chain runs to 164 residues: UPF0178 protein RPB_3201 (164 aa).

It belongs to the UPF0178 family.

The sequence is that of UPF0178 protein RPB_3201 from Rhodopseudomonas palustris (strain HaA2).